A 131-amino-acid chain; its full sequence is Putative protein PTGES3L (131 aa).

The region spanning 3–91 (RQPARTLWYD…KEKVAWPRLT (89 aa)) is the CS domain.

Belongs to the p23/wos2 family.

This is Putative protein PTGES3L (Ptges3l) from Mus musculus (Mouse).